Here is a 127-residue protein sequence, read N- to C-terminus: Large ribosomal subunit protein bL17 (127 aa).

It belongs to the bacterial ribosomal protein bL17 family. In terms of assembly, part of the 50S ribosomal subunit. Contacts protein L32.

The sequence is that of Large ribosomal subunit protein bL17 from Fervidobacterium nodosum (strain ATCC 35602 / DSM 5306 / Rt17-B1).